A 255-amino-acid polypeptide reads, in one-letter code: Triosephosphate isomerase (255 aa).

9 to 11 (NWK) contributes to the substrate binding site. The Electrophile role is filled by histidine 95. Glutamate 167 acts as the Proton acceptor in catalysis. Substrate-binding positions include glycine 173, serine 212, and 233 to 234 (GG).

The protein belongs to the triosephosphate isomerase family. As to quaternary structure, homodimer.

It is found in the cytoplasm. The enzyme catalyses D-glyceraldehyde 3-phosphate = dihydroxyacetone phosphate. The protein operates within carbohydrate biosynthesis; gluconeogenesis. It functions in the pathway carbohydrate degradation; glycolysis; D-glyceraldehyde 3-phosphate from glycerone phosphate: step 1/1. Its function is as follows. Involved in the gluconeogenesis. Catalyzes stereospecifically the conversion of dihydroxyacetone phosphate (DHAP) to D-glyceraldehyde-3-phosphate (G3P). The protein is Triosephosphate isomerase of Klebsiella pneumoniae.